The sequence spans 431 residues: Glucose-1-phosphate adenylyltransferase (431 aa).

A beta-D-fructose 1,6-bisphosphate-binding site is contributed by Lys-39. Positions 40, 46, and 52 each coordinate AMP. Residue Tyr-114 coordinates alpha-D-glucose 1-phosphate. An AMP-binding site is contributed by Arg-130. Alpha-D-glucose 1-phosphate-binding positions include Gly-179, 194–195 (EK), and Ser-212. AMP contacts are provided by Glu-370 and Arg-386. Beta-D-fructose 1,6-bisphosphate-binding positions include 419–423 (REMLR) and 429–431 (QER).

The protein belongs to the bacterial/plant glucose-1-phosphate adenylyltransferase family. Homotetramer.

The catalysed reaction is alpha-D-glucose 1-phosphate + ATP + H(+) = ADP-alpha-D-glucose + diphosphate. It functions in the pathway glycan biosynthesis; glycogen biosynthesis. Its activity is regulated as follows. Allosterically activated by fructose-1,6-bisphosphate (F16BP) and inhibited by AMP. Involved in the biosynthesis of ADP-glucose, a building block required for the elongation reactions to produce glycogen. Catalyzes the reaction between ATP and alpha-D-glucose 1-phosphate (G1P) to produce pyrophosphate and ADP-Glc. The sequence is that of Glucose-1-phosphate adenylyltransferase from Escherichia coli O127:H6 (strain E2348/69 / EPEC).